The chain runs to 467 residues: Probable lipase C1672.09 (467 aa).

The Cytoplasmic portion of the chain corresponds to 1–17; it reads MIQLPFIQRLKWEEYMA. The helical; Signal-anchor for type II membrane protein transmembrane segment at 18–38 threads the bilayer; the sequence is LFLGFFFVIFEKLLSCLAFMI. Over 39 to 467 the chain is Lumenal; sequence HNTLGLFYRS…NHIAPRNKPI (429 aa). Ser-66 is modified (phosphoserine). The AB hydrolase-1 domain maps to 127 to 421; sequence PVVYCHHGLL…SYEHLDMIWA (295 aa). The Nucleophile role is filled by Ser-222. Asn-311 and Asn-316 each carry an N-linked (GlcNAc...) asparagine glycan. Residues Asp-389 and His-415 each act as charge relay system in the active site. A compositionally biased stretch (basic and acidic residues) spans 440–457; the sequence is HHPPEHEENDKENREIQK. Residues 440–467 form a disordered region; it reads HHPPEHEENDKENREIQKNHIAPRNKPI.

The protein belongs to the AB hydrolase superfamily. Lipase family.

The protein localises to the cytoplasm. It localises to the membrane. Probable lipase. The protein is Probable lipase C1672.09 of Schizosaccharomyces pombe (strain 972 / ATCC 24843) (Fission yeast).